We begin with the raw amino-acid sequence, 112 residues long: Putative regulatory protein DP2861 (112 aa).

Belongs to the RemA family.

This Desulfotalea psychrophila (strain LSv54 / DSM 12343) protein is Putative regulatory protein DP2861.